A 181-amino-acid polypeptide reads, in one-letter code: UPF0177 protein YbdI (181 aa).

Helical transmembrane passes span 10–30, 41–61, 81–101, 114–134, and 161–181; these read ILFLVILFIVLYIAIKTGVFA, LLWLLGFVIVGYILGNIAHYL, FVDSFLPTWFVYILMVVIAPI, FFSHKWLAYILSILLFTLIHT, and SDSIIVHGGYNLMVLIFHIII.

This sequence belongs to the UPF0177 family.

It is found in the cell membrane. This Lactococcus lactis subsp. lactis (strain IL1403) (Streptococcus lactis) protein is UPF0177 protein YbdI (ybdI).